The following is a 269-amino-acid chain: Cell cycle regulator CcrZ (269 aa).

Residues phenylalanine 39, histidine 76, tryptophan 77, methionine 78, and glycine 80 each contribute to the ATP site. The short motif at 164–171 (HCDVNHNN) is the Brenner's motif [HXDhX3N] element. Aspartate 166 acts as the Proton acceptor in catalysis. The short motif at 180 to 203 (LYLIDWDGAMIADPAMDLGPLLYH) is the APH element.

Belongs to the aminoglycoside phosphotransferase family. In terms of assembly, monomer in solution. Interacts with DnaA (via domains I (1-82) and III (111-326)). Interacts with DnaB. Interacts with FtsZ.

The protein localises to the cytoplasm. The catalysed reaction is D-ribose + ATP = D-ribose 5-phosphate + ADP + H(+). It catalyses the reaction 2-deoxy-D-ribose + ATP = 2-deoxy-D-ribose 5-phosphate + ADP + H(+). Its activity is regulated as follows. Activated by D-ribose and 2-deoxy-D-ribose. Slightly activated by kanamycin and gentamicin. Plays a role in cell cycle regulation and chromosome integrity. Activates DnaA-dependent chromosomal DNA replication initiation ensuring that the chromosome is replicated at the right time during the cell cycle. May regulate replication initiation through phosphorylation of a possible second messenger or metabolite, and by interacting with replication initiation proteins. Has ATPase activity with D-ribose and 2-deoxy-D-ribose in vitro, but not with choline. Involved in DNA damage response. In Bacillus subtilis (strain 168), this protein is Cell cycle regulator CcrZ.